The primary structure comprises 648 residues: Macrolide export ATP-binding/permease protein MacB (648 aa).

The ABC transporter domain occupies 5 to 243 (LELKDIRRSY…TGGTEPVVNT (239 aa)). 41-48 (GASGSGKS) contacts ATP. Helical transmembrane passes span 273 to 293 (LLTMLGIIIGIASVVSIVVVG), 523 to 543 (LFLTLVAVISLVVGGIGVMNI), 576 to 596 (AVLVCLVGGALGITLSLLIAF), and 611 to 631 (PLALLLAFLCSTVTGILFGWL).

It belongs to the ABC transporter superfamily. Macrolide exporter (TC 3.A.1.122) family. Homodimer. Part of the tripartite efflux system MacAB-TolC, which is composed of an inner membrane transporter, MacB, a periplasmic membrane fusion protein, MacA, and an outer membrane component, TolC. The complex forms a large protein conduit and can translocate molecules across both the inner and outer membranes. Interacts with MacA.

The protein resides in the cell inner membrane. Its function is as follows. Part of the tripartite efflux system MacAB-TolC. MacB is a non-canonical ABC transporter that contains transmembrane domains (TMD), which form a pore in the inner membrane, and an ATP-binding domain (NBD), which is responsible for energy generation. Confers resistance against macrolides. The sequence is that of Macrolide export ATP-binding/permease protein MacB from Escherichia coli O6:K15:H31 (strain 536 / UPEC).